Here is a 982-residue protein sequence, read N- to C-terminus: E3 ubiquitin-protein ligase CBL-B (982 aa).

Residues Pro35–Gln167 form a 4H region. A Cbl-PTB domain is found at Pro35–Gly343. The interval Gly168–Phe240 is EF-hand-like. Ca(2+) is bound by residues Asp221, Thr223, Asn225, Tyr227, and Glu232. Residues Gln241–Gly343 form an SH2-like region. Ser282 is subject to Phosphoserine; by PKC/PRKCQ. Arg286 serves as a coordination point for 4-O-phospho-L-tyrosine. The linker stretch occupies residues Leu344 to Leu372. Tyr363 bears the Phosphotyrosine mark. An RING-type zinc finger spans residues Cys373 to Arg412. Residues Ala465–Pro588 are disordered. Residues Arg473–Leu486 show a composition bias toward polar residues. A phosphoserine mark is found at Ser476, Ser480, Ser484, Ser521, Ser525, and Ser529. The interval Pro543–Asp567 is interaction with VAV1. Pro residues predominate over residues Leu544–Pro566. Ser633 carries the phosphoserine modification. Residues Tyr664 and Tyr708 each carry the phosphotyrosine modification. Disordered stretches follow at residues Glu702 to Ser723 and Thr745 to Leu929. Positions His714–Ser723 are enriched in polar residues. Over residues Pro819 to Ala828 the composition is skewed to pro residues. The span at Pro838 to Gly848 shows a compositional bias: low complexity. A compositionally biased stretch (polar residues) spans Arg884–Ser899. Residue Tyr889 is modified to Phosphotyrosine. Residues Gln891–Ala927 are interaction with SH3KBP1. Positions Pro906–Pro922 are enriched in basic residues. Positions Asn931 to Phe970 constitute a UBA domain.

In terms of assembly, interacts with SH3 domain-containing proteins LCK, CRK and SORBS1. Interacts with LCP2 and ZAP70. Interacts with CBL. Interacts with SH3 domain-containing proteins VAV1, FYN, FGR, PLCG1, GRB2, CRKL, PIK3R1 and SH3KBP1/CIN85. Identified in heterotrimeric complexes with SH3KBP1/CIN85, CD2AP and ARHGEF7, where one CBLB peptide binds two copies of the other protein. Interacts with poly-ubiquitinated proteins. Dimerization is required for the binding of poly-ubiquitin, but not for the binding of mono-ubiquitin. Interacts with EGFR (phosphorylated). Interacts with IFT20. In terms of processing, phosphorylated on tyrosine and serine residues upon TCR or BCR activation. Phosphorylated on Tyr-664 and Tyr-708 in adipocytes following insulin stimulation. Auto-ubiquitinated upon EGF-mediated cell activation or upon T-cell costimulation by CD28; which promotes proteasomal degradation.

Its subcellular location is the cytoplasm. It catalyses the reaction S-ubiquitinyl-[E2 ubiquitin-conjugating enzyme]-L-cysteine + [acceptor protein]-L-lysine = [E2 ubiquitin-conjugating enzyme]-L-cysteine + N(6)-ubiquitinyl-[acceptor protein]-L-lysine.. It participates in protein modification; protein ubiquitination. Functionally, E3 ubiquitin-protein ligase which accepts ubiquitin from specific E2 ubiquitin-conjugating enzymes, and transfers it to substrates, generally promoting their degradation by the proteasome. Negatively regulates TCR (T-cell receptor), BCR (B-cell receptor) and FCER1 (high affinity immunoglobulin epsilon receptor) signal transduction pathways. In naive T-cells, inhibits VAV1 activation upon TCR engagement and imposes a requirement for CD28 costimulation for proliferation and IL-2 production. Also acts by promoting PIK3R1/p85 ubiquitination, which impairs its recruitment to the TCR and subsequent activation. In activated T-cells, inhibits PLCG1 activation and calcium mobilization upon restimulation and promotes anergy. In B-cells, acts by ubiquitinating SYK and promoting its proteasomal degradation. Slightly promotes SRC ubiquitination. May be involved in EGFR ubiquitination and internalization. May be functionally coupled with the E2 ubiquitin-protein ligase UB2D3. In association with CBL, required for proper feedback inhibition of ciliary platelet-derived growth factor receptor-alpha (PDGFRA) signaling pathway via ubiquitination and internalization of PDGFRA. This Mus musculus (Mouse) protein is E3 ubiquitin-protein ligase CBL-B (Cblb).